The sequence spans 311 residues: Glycine--tRNA ligase alpha subunit (311 aa).

It belongs to the class-II aminoacyl-tRNA synthetase family. In terms of assembly, tetramer of two alpha and two beta subunits.

The protein localises to the cytoplasm. It carries out the reaction tRNA(Gly) + glycine + ATP = glycyl-tRNA(Gly) + AMP + diphosphate. The protein is Glycine--tRNA ligase alpha subunit of Rhizobium meliloti (strain 1021) (Ensifer meliloti).